The following is a 248-amino-acid chain: Large ribosomal subunit protein bL9m (248 aa).

A mitochondrion-targeting transit peptide spans 1 to 25 (MLKNIYVTPLNLLKSATSLQQQVRT).

This sequence belongs to the bacterial ribosomal protein bL9 family. In terms of assembly, component of the mitochondrial ribosome large subunit (39S) which comprises a 16S rRNA and about 50 distinct proteins.

It is found in the mitochondrion. This is Large ribosomal subunit protein bL9m (mRpL9) from Drosophila melanogaster (Fruit fly).